Reading from the N-terminus, the 95-residue chain is ESAT-6-like protein EsxA (95 aa).

It belongs to the WXG100 family. ESAT-6 subfamily. As to quaternary structure, forms a tight 1:1 complex with EsxB. An artificial EsxA-EsxB heterodimer interacts with EspA.

Its subcellular location is the secreted. Functionally, an exported protein. Unlike its M.tuberculosis counterpart has poor pore forming ability in artificial liposomes, does not undergo conformational change at acidic pH. Mutation of 2 residues to those found in M.tuberculosis (25-TA-26 to IH) alters the properties of this protein so that it inserts into liposomes at acidic pH, forming pores, like its M.tuberculosis counterpart. This is ESAT-6-like protein EsxA from Mycolicibacterium smegmatis (strain ATCC 700084 / mc(2)155) (Mycobacterium smegmatis).